The sequence spans 181 residues: MIRDLEYYDSPILRKVAAPVTEITDELRQLVLDMSETMAFYKGVGLAAPQVGQSISLFIMGVERELEDGELVFCDFPRVFINPVITQKSEQLVYGNEGCLSIPGLRGEVARPDKITVSAKNLDGQQFSLALEGFLARIVMHETDHLHGVLYIDRMSDKDKTKQFKNNLEKIRRKYSILRGL.

Fe cation-binding residues include Cys-99 and His-141. Glu-142 is a catalytic residue. Fe cation is bound at residue His-145.

Belongs to the polypeptide deformylase family. Requires Fe(2+) as cofactor.

The catalysed reaction is N-terminal N-formyl-L-methionyl-[peptide] + H2O = N-terminal L-methionyl-[peptide] + formate. Its function is as follows. Removes the formyl group from the N-terminal Met of newly synthesized proteins. Requires at least a dipeptide for an efficient rate of reaction. N-terminal L-methionine is a prerequisite for activity but the enzyme has broad specificity at other positions. The sequence is that of Peptide deformylase from Chlamydia trachomatis serovar A (strain ATCC VR-571B / DSM 19440 / HAR-13).